The chain runs to 228 residues: Protein SVP26 (228 aa).

A topological domain (cytoplasmic) is located at residue methionine 1. Residues 2 to 22 traverse the membrane as a helical segment; the sequence is LLELISYAGTVSGFLFLTLSI. The Lumenal segment spans residues 23–42; the sequence is ASGLYYISELVEEHTEPTRR. Residues 43 to 59 form a helical membrane-spanning segment; that stretch reads FLTRAIYGIILILILLL. The Cytoplasmic segment spans residues 60 to 88; it reads LLDGFPFKLTLFSIACYIVYYQNLKSFPF. The helical transmembrane segment at 89-105 threads the bilayer; it reads ISLTSPTFLLSCVCVVL. At 106–142 the chain is on the lumenal side; it reads NHYFWFKYFNDTEVPPQFKFDPNYIPRRRASFAEVAS. A glycan (N-linked (GlcNAc...) asparagine) is linked at asparagine 115. A helical membrane pass occupies residues 143–166; it reads FFGICVWFIPFALFVSLSAGDYVL. At 167 to 228 the chain is on the cytoplasmic side; that stretch reads PTTSEQHMAK…IEPDFDRLAV (62 aa).

The protein belongs to the SVP26 family. In terms of assembly, interacts with itself. Interacts with KTR3, MNN2 and MNN5. In terms of processing, N-glycosylated.

Its subcellular location is the golgi apparatus. It is found in the cis-Golgi network membrane. In terms of biological role, plays a role in retention of a subset of membrane proteins in the early Golgi compartments. Facilitates endoplasmic reticulum to Golgi transport of mannosyltransferases MNN2 and MNN5. In Saccharomyces cerevisiae (strain ATCC 204508 / S288c) (Baker's yeast), this protein is Protein SVP26 (SVP26).